The primary structure comprises 76 residues: Acyl carrier protein (76 aa).

One can recognise a Carrier domain in the interval 1–76; that stretch reads MATFDDVKDV…AAVDYIDNNQ (76 aa). S36 is modified (O-(pantetheine 4'-phosphoryl)serine).

The protein belongs to the acyl carrier protein (ACP) family. 4'-phosphopantetheine is transferred from CoA to a specific serine of apo-ACP by AcpS. This modification is essential for activity because fatty acids are bound in thioester linkage to the sulfhydryl of the prosthetic group.

Its subcellular location is the cytoplasm. It functions in the pathway lipid metabolism; fatty acid biosynthesis. Functionally, carrier of the growing fatty acid chain in fatty acid biosynthesis. The sequence is that of Acyl carrier protein from Deinococcus radiodurans (strain ATCC 13939 / DSM 20539 / JCM 16871 / CCUG 27074 / LMG 4051 / NBRC 15346 / NCIMB 9279 / VKM B-1422 / R1).